Reading from the N-terminus, the 548-residue chain is Chaperonin GroEL (548 aa).

ATP is bound by residues 30 to 33 (TLGP), lysine 51, 87 to 91 (DGTTT), glycine 415, 479 to 481 (NAA), and aspartate 495. The segment at 524 to 548 (LPKEDKSSDSNSSPAGGMGGMGGMM) is disordered. Residues 539-548 (GGMGGMGGMM) are compositionally biased toward gly residues.

It belongs to the chaperonin (HSP60) family. Forms a cylinder of 14 subunits composed of two heptameric rings stacked back-to-back. Interacts with the co-chaperonin GroES.

The protein resides in the cytoplasm. It carries out the reaction ATP + H2O + a folded polypeptide = ADP + phosphate + an unfolded polypeptide.. Its function is as follows. Together with its co-chaperonin GroES, plays an essential role in assisting protein folding. The GroEL-GroES system forms a nano-cage that allows encapsulation of the non-native substrate proteins and provides a physical environment optimized to promote and accelerate protein folding. The sequence is that of Chaperonin GroEL from Buchnera aphidicola subsp. Myzus persicae (Myzus persicae primary endosymbiont).